Reading from the N-terminus, the 284-residue chain is Nucleotide-binding protein Sden_0486 (284 aa).

8 to 15 contacts ATP; it reads GRSGSGKS. 56–59 contacts GTP; the sequence is DVRN.

It belongs to the RapZ-like family.

In terms of biological role, displays ATPase and GTPase activities. The sequence is that of Nucleotide-binding protein Sden_0486 from Shewanella denitrificans (strain OS217 / ATCC BAA-1090 / DSM 15013).